The primary structure comprises 157 residues: uncharacterized protein (157 aa).

The N-acetyltransferase domain occupies 9 to 146; it reads LLINYKTLDE…GDFYVWHPET (138 aa).

This is an uncharacterized protein from Bacillus cereus (strain ZK / E33L).